The following is a 464-amino-acid chain: ATP synthase subunit beta 1 (464 aa).

153–160 (GGAGVGKT) provides a ligand contact to ATP.

The protein belongs to the ATPase alpha/beta chains family. As to quaternary structure, F-type ATPases have 2 components, CF(1) - the catalytic core - and CF(0) - the membrane proton channel. CF(1) has five subunits: alpha(3), beta(3), gamma(1), delta(1), epsilon(1). CF(0) has three main subunits: a(1), b(2) and c(9-12). The alpha and beta chains form an alternating ring which encloses part of the gamma chain. CF(1) is attached to CF(0) by a central stalk formed by the gamma and epsilon chains, while a peripheral stalk is formed by the delta and b chains.

The protein resides in the cell inner membrane. It carries out the reaction ATP + H2O + 4 H(+)(in) = ADP + phosphate + 5 H(+)(out). Produces ATP from ADP in the presence of a proton gradient across the membrane. The catalytic sites are hosted primarily by the beta subunits. This chain is ATP synthase subunit beta 1, found in Burkholderia mallei (strain SAVP1).